Reading from the N-terminus, the 504-residue chain is Histidine--tRNA ligase (504 aa).

The protein belongs to the class-II aminoacyl-tRNA synthetase family. As to quaternary structure, homodimer.

The protein localises to the cytoplasm. It carries out the reaction tRNA(His) + L-histidine + ATP = L-histidyl-tRNA(His) + AMP + diphosphate + H(+). The sequence is that of Histidine--tRNA ligase (hisS) from Rhizobium meliloti (strain 1021) (Ensifer meliloti).